The chain runs to 207 residues: Dephospho-CoA kinase (207 aa).

The DPCK domain maps to 12–207; that stretch reads LIGITGMIGG…LYSTLLGKML (196 aa). 20 to 25 contributes to the ATP binding site; sequence GGGKST.

This sequence belongs to the CoaE family.

It localises to the cytoplasm. It catalyses the reaction 3'-dephospho-CoA + ATP = ADP + CoA + H(+). It participates in cofactor biosynthesis; coenzyme A biosynthesis; CoA from (R)-pantothenate: step 5/5. Its function is as follows. Catalyzes the phosphorylation of the 3'-hydroxyl group of dephosphocoenzyme A to form coenzyme A. This chain is Dephospho-CoA kinase, found in Leptospira interrogans serogroup Icterohaemorrhagiae serovar copenhageni (strain Fiocruz L1-130).